The chain runs to 143 residues: Nucleoside diphosphate kinase (143 aa).

6 residues coordinate ATP: Lys-11, Phe-59, Arg-87, Thr-93, Arg-104, and Asn-114. His-117 (pros-phosphohistidine intermediate) is an active-site residue.

It belongs to the NDK family. Homotetramer. The cofactor is Mg(2+).

Its subcellular location is the cytoplasm. The enzyme catalyses a 2'-deoxyribonucleoside 5'-diphosphate + ATP = a 2'-deoxyribonucleoside 5'-triphosphate + ADP. It catalyses the reaction a ribonucleoside 5'-diphosphate + ATP = a ribonucleoside 5'-triphosphate + ADP. Functionally, major role in the synthesis of nucleoside triphosphates other than ATP. The ATP gamma phosphate is transferred to the NDP beta phosphate via a ping-pong mechanism, using a phosphorylated active-site intermediate. This is Nucleoside diphosphate kinase from Salmonella arizonae (strain ATCC BAA-731 / CDC346-86 / RSK2980).